Here is a 122-residue protein sequence, read N- to C-terminus: MIQPFTRLKVADNSGAKEIMCIKVLGGSKRRYASVGDIIVASVKKALPNGKIKKGQVVKAVIVRTKKEVQRENGSLIRFDDNAAVIIDAKKEPIGTRIFGPIAREVRYEGFQKITSLAPEVL.

It belongs to the universal ribosomal protein uL14 family. In terms of assembly, part of the 50S ribosomal subunit. Forms a cluster with proteins L3 and L19. In the 70S ribosome, L14 and L19 interact and together make contacts with the 16S rRNA in bridges B5 and B8.

Its function is as follows. Binds to 23S rRNA. Forms part of two intersubunit bridges in the 70S ribosome. This is Large ribosomal subunit protein uL14 from Nautilia profundicola (strain ATCC BAA-1463 / DSM 18972 / AmH).